Here is a 340-residue protein sequence, read N- to C-terminus: Extracellular matrix protein-binding protein emp (340 aa).

An N-terminal signal peptide occupies residues 1 to 26; it reads MKKKLLVLTMSTLFATQIMNSNHAKA.

The protein localises to the cell surface. Adhesin that binds to the host cell extracellular matrix proteins fibronectin, fibrinogen, collagen, and vitronectin. In Staphylococcus aureus (strain USA300), this protein is Extracellular matrix protein-binding protein emp (emp).